Consider the following 189-residue polypeptide: Photosystem I assembly protein Ycf4 (189 aa).

2 helical membrane-spanning segments follow: residues 25-45 (SVYF…LAGL) and 62-82 (LVFI…SLAG).

The protein belongs to the Ycf4 family.

It localises to the cellular thylakoid membrane. Functionally, seems to be required for the assembly of the photosystem I complex. In Synechococcus sp. (strain JA-2-3B'a(2-13)) (Cyanobacteria bacterium Yellowstone B-Prime), this protein is Photosystem I assembly protein Ycf4.